The chain runs to 298 residues: Golgi to ER traffic protein 2 (298 aa).

Residues 1–164 are Cytoplasmic-facing; the sequence is MSEPVVDTAE…LEYNTYNQKL (164 aa). The tract at residues 40-92 is disordered; sequence ILSQGSSVKTSGVKSVLDQEKEATPSHDEDPEIQDITEITTPPPRTPPIGEDA. Low complexity predominate over residues 42-55; it reads SQGSSVKTSGVKSV. The segment covering 56 to 67 has biased composition (basic and acidic residues); the sequence is LDQEKEATPSHD. Residues 165-185 form a helical membrane-spanning segment; it reads WKFRFLLVRVSVTLFNFFYHY. Residues 186–211 lie on the Lumenal side of the membrane; that stretch reads INLSNFHASNYAYVRDLSSEKYPVRD. The chain crosses the membrane as a helical span at residues 212-231; it reads FFTWFATTEVVLVAAYYSIF. Topologically, residues 232–275 are cytoplasmic; that stretch reads HSLGLFHAANQNSFVLKAMSMGSMVLPQLEHYKPLVARFLGYYE. Residues 276-296 form a helical membrane-spanning segment; it reads LLGIVLGDLSLVIVLFGLLSF. The Lumenal segment spans residues 297 to 298; the sequence is AN.

This sequence belongs to the GET2 family. As to quaternary structure, component of the Golgi to ER traffic (GET) complex, which is composed of GET1, GET2 and GET3. Within the complex, GET1 and GET2 form a heterotetramer which is stabilized by phosphatidylinositol binding and which binds to the GET3 homodimer.

It localises to the endoplasmic reticulum membrane. It is found in the golgi apparatus membrane. Its function is as follows. Required for the post-translational delivery of tail-anchored (TA) proteins to the endoplasmic reticulum. Together with GET1, acts as a membrane receptor for soluble GET3, which recognizes and selectively binds the transmembrane domain of TA proteins in the cytosol. The GET complex cooperates with the HDEL receptor ERD2 to mediate the ATP-dependent retrieval of resident ER proteins that contain a C-terminal H-D-E-L retention signal from the Golgi to the ER. This is Golgi to ER traffic protein 2 from Candida albicans (strain SC5314 / ATCC MYA-2876) (Yeast).